A 791-amino-acid chain; its full sequence is Centrosomal protein of 89 kDa (791 aa).

The tract at residues 27–203 (APKPAVPRTP…HTQQKDVKHS (177 aa)) is disordered. Positions 30-45 (PAVPRTPPPRSPNPSP) are enriched in pro residues. At Ser-50 the chain carries Phosphoserine. Residues 50–62 (SALAAAILATTLT) are compositionally biased toward low complexity. Over residues 75-89 (SRSESDASDIEKDSF) the composition is skewed to basic and acidic residues. Over residues 94 to 107 (ATTSELRLRQSWQN) the composition is skewed to polar residues. Residues 137–161 (RESESTWKDVGDGRDATYTVPHRDQ) are compositionally biased toward basic and acidic residues. The span at 181–190 (SDSSSSSSSS) shows a compositional bias: low complexity. 3 coiled-coil regions span residues 252-291 (SANQALSCELSALRQAMKDLQLKLKLVEKDNRKLKETEKA), 370-598 (LLAY…MGKE), and 670-737 (HRLK…SLLQ).

The protein localises to the cytoplasm. It localises to the cytosol. The protein resides in the cytoskeleton. It is found in the microtubule organizing center. Its subcellular location is the centrosome. The protein localises to the spindle pole. It localises to the centriole. The protein resides in the mitochondrion intermembrane space. Functionally, required for ciliogenesis. Also plays a role in mitochondrial metabolism where it may modulate complex IV activity. The protein is Centrosomal protein of 89 kDa (Cep89) of Mus musculus (Mouse).